We begin with the raw amino-acid sequence, 255 residues long: Large ribosomal subunit protein uL4 (255 aa).

It belongs to the universal ribosomal protein uL4 family. As to quaternary structure, part of the 50S ribosomal subunit.

One of the primary rRNA binding proteins, this protein initially binds near the 5'-end of the 23S rRNA. It is important during the early stages of 50S assembly. It makes multiple contacts with different domains of the 23S rRNA in the assembled 50S subunit and ribosome. In terms of biological role, forms part of the polypeptide exit tunnel. The protein is Large ribosomal subunit protein uL4 of Thermococcus kodakarensis (strain ATCC BAA-918 / JCM 12380 / KOD1) (Pyrococcus kodakaraensis (strain KOD1)).